The primary structure comprises 289 residues: ATP synthase gamma chain (289 aa).

This sequence belongs to the ATPase gamma chain family. As to quaternary structure, F-type ATPases have 2 components, CF(1) - the catalytic core - and CF(0) - the membrane proton channel. CF(1) has five subunits: alpha(3), beta(3), gamma(1), delta(1), epsilon(1). CF(0) has three main subunits: a, b and c.

The protein localises to the cell inner membrane. Functionally, produces ATP from ADP in the presence of a proton gradient across the membrane. The gamma chain is believed to be important in regulating ATPase activity and the flow of protons through the CF(0) complex. The protein is ATP synthase gamma chain of Acinetobacter baumannii (strain AB307-0294).